The primary structure comprises 119 residues: UPF0102 protein MS1289 (119 aa).

Belongs to the UPF0102 family.

The sequence is that of UPF0102 protein MS1289 from Mannheimia succiniciproducens (strain KCTC 0769BP / MBEL55E).